Consider the following 540-residue polypeptide: Peptide chain release factor 3 (540 aa).

Residues 14 to 283 enclose the tr-type G domain; sequence ELRRNFAIIS…YFLNYALKPG (270 aa). Residues 23-30, 91-95, and 145-148 each bind GTP; these read SHPDAGKT, DTPGH, and NKLD.

Belongs to the TRAFAC class translation factor GTPase superfamily. Classic translation factor GTPase family. PrfC subfamily.

Its subcellular location is the cytoplasm. In terms of biological role, increases the formation of ribosomal termination complexes and stimulates activities of RF-1 and RF-2. It binds guanine nucleotides and has strong preference for UGA stop codons. It may interact directly with the ribosome. The stimulation of RF-1 and RF-2 is significantly reduced by GTP and GDP, but not by GMP. This Trichormus variabilis (strain ATCC 29413 / PCC 7937) (Anabaena variabilis) protein is Peptide chain release factor 3.